Consider the following 1160-residue polypeptide: Carbamoyl phosphate synthase arginine-specific large chain, mitochondrial (1160 aa).

Positions 81-478 (AEHEKVKKVV…SLQKALRQVD (398 aa)) are carboxyphosphate synthetic domain. Arginine 208, arginine 248, glycine 254, glycine 255, lysine 285, leucine 287, glutamate 292, glycine 318, isoleucine 319, histidine 320, glutamine 361, and glutamate 375 together coordinate ATP. The 193-residue stretch at 212–404 (AKALNEINIP…LAYTAAKIAL (193 aa)) folds into the ATP-grasp 1 domain. Residues glutamine 361, glutamate 375, and asparagine 377 each coordinate Mg(2+). Mn(2+) contacts are provided by glutamine 361, glutamate 375, and asparagine 377. The interval 479 to 623 (PSFLGFMAMP…YTSYNASSHD (145 aa)) is oligomerization domain. The segment at 624–1012 (IDFNEHGTMV…AYWAALQSTQ (389 aa)) is carbamoyl phosphate synthetic domain. An ATP-grasp 2 domain is found at 748-946 (SQILDKIGVD…FIDVATRSII (199 aa)). ATP is bound by residues arginine 784, lysine 823, isoleucine 825, glutamate 830, glycine 855, valine 856, histidine 857, serine 858, glutamine 898, and glutamate 917. The Mg(2+) site is built by glutamine 898, glutamate 917, and asparagine 919. Glutamine 898, glutamate 917, and asparagine 919 together coordinate Mn(2+). The allosteric domain stretch occupies residues 1013–1144 (NFKIPLPGQG…PSVLSEKKEM (132 aa)). Residues 1014-1160 (FKIPLPGQGI…WSEWIGSHDL (147 aa)) enclose the MGS-like domain.

Belongs to the CarB family. In terms of assembly, heterodimer composed of 2 chains; the small (or glutamine) chain promotes the hydrolysis of glutamine to ammonia, which is used by the large (or ammonia) chain to synthesize carbamoyl phosphate. The cofactor is Mg(2+). It depends on Mn(2+) as a cofactor.

The protein resides in the mitochondrion. The enzyme catalyses hydrogencarbonate + L-glutamine + 2 ATP + H2O = carbamoyl phosphate + L-glutamate + 2 ADP + phosphate + 2 H(+). It catalyses the reaction hydrogencarbonate + NH4(+) + 2 ATP = carbamoyl phosphate + 2 ADP + phosphate + 2 H(+). The protein operates within amino-acid biosynthesis; L-arginine biosynthesis; carbamoyl phosphate from bicarbonate: step 1/1. Large subunit of the arginine-specific carbamoyl phosphate synthase (CPSase). CPSase catalyzes the formation of carbamoyl phosphate from the ammonia moiety of glutamine, hydrogencarbonate, and phosphate donated by ATP, the first step of the arginine biosynthetic pathway. The large subunit (synthetase) binds the substrates ammonia (free or transferred from glutamine from the small subunit), hydrogencarbonate and ATP and carries out an ATP-coupled ligase reaction, activating hydrogencarbonate by forming carboxy phosphate which reacts with ammonia to form carbamoyl phosphate. The polypeptide is Carbamoyl phosphate synthase arginine-specific large chain, mitochondrial (arg4) (Schizosaccharomyces pombe (strain 972 / ATCC 24843) (Fission yeast)).